A 154-amino-acid polypeptide reads, in one-letter code: 6,7-dimethyl-8-ribityllumazine synthase (154 aa).

5-amino-6-(D-ribitylamino)uracil is bound by residues phenylalanine 22, 56 to 58, and 80 to 82; these read AFE and AVI. (2S)-2-hydroxy-3-oxobutyl phosphate is bound at residue 85-86; sequence AT. Catalysis depends on histidine 88, which acts as the Proton donor. Phenylalanine 113 is a binding site for 5-amino-6-(D-ribitylamino)uracil. Arginine 127 serves as a coordination point for (2S)-2-hydroxy-3-oxobutyl phosphate.

It belongs to the DMRL synthase family. Forms an icosahedral capsid composed of 60 subunits, arranged as a dodecamer of pentamers.

It carries out the reaction (2S)-2-hydroxy-3-oxobutyl phosphate + 5-amino-6-(D-ribitylamino)uracil = 6,7-dimethyl-8-(1-D-ribityl)lumazine + phosphate + 2 H2O + H(+). Its pathway is cofactor biosynthesis; riboflavin biosynthesis; riboflavin from 2-hydroxy-3-oxobutyl phosphate and 5-amino-6-(D-ribitylamino)uracil: step 1/2. Catalyzes the formation of 6,7-dimethyl-8-ribityllumazine by condensation of 5-amino-6-(D-ribitylamino)uracil with 3,4-dihydroxy-2-butanone 4-phosphate. This is the penultimate step in the biosynthesis of riboflavin. The polypeptide is 6,7-dimethyl-8-ribityllumazine synthase (Geobacillus sp. (strain WCH70)).